The following is a 166-amino-acid chain: ATP synthase subunit b (166 aa).

A helical transmembrane segment spans residues 15–37; the sequence is TLYYLLIFAALLLLVKHFAWGPV.

Belongs to the ATPase B chain family. In terms of assembly, F-type ATPases have 2 components, F(1) - the catalytic core - and F(0) - the membrane proton channel. F(1) has five subunits: alpha(3), beta(3), gamma(1), delta(1), epsilon(1). F(0) has three main subunits: a(1), b(2) and c(10-14). The alpha and beta chains form an alternating ring which encloses part of the gamma chain. F(1) is attached to F(0) by a central stalk formed by the gamma and epsilon chains, while a peripheral stalk is formed by the delta and b chains.

The protein resides in the cell membrane. In terms of biological role, f(1)F(0) ATP synthase produces ATP from ADP in the presence of a proton or sodium gradient. F-type ATPases consist of two structural domains, F(1) containing the extramembraneous catalytic core and F(0) containing the membrane proton channel, linked together by a central stalk and a peripheral stalk. During catalysis, ATP synthesis in the catalytic domain of F(1) is coupled via a rotary mechanism of the central stalk subunits to proton translocation. Component of the F(0) channel, it forms part of the peripheral stalk, linking F(1) to F(0). The polypeptide is ATP synthase subunit b (Lactobacillus johnsonii (strain CNCM I-12250 / La1 / NCC 533)).